The primary structure comprises 197 residues: Shikimate kinase (197 aa).

26-31 (GSGKSR) contributes to the ATP binding site. Mg(2+) is bound at residue Ser-30. Positions 48, 72, and 94 each coordinate substrate. An ATP-binding site is contributed by Arg-132. Arg-150 lines the substrate pocket.

The protein belongs to the shikimate kinase family. In terms of assembly, monomer. Mg(2+) serves as cofactor.

The protein localises to the cytoplasm. It catalyses the reaction shikimate + ATP = 3-phosphoshikimate + ADP + H(+). Its pathway is metabolic intermediate biosynthesis; chorismate biosynthesis; chorismate from D-erythrose 4-phosphate and phosphoenolpyruvate: step 5/7. Its function is as follows. Catalyzes the specific phosphorylation of the 3-hydroxyl group of shikimic acid using ATP as a cosubstrate. The chain is Shikimate kinase from Prochlorococcus marinus (strain MIT 9211).